A 475-amino-acid chain; its full sequence is L-ornithine N(5)-monooxygenase (475 aa).

Residues 65–73 (ERQPEFGWH) and Gln84 contribute to the FAD site. Lys89 provides a ligand contact to substrate. Residue Val150 participates in FAD binding. Residue 238-241 (GGQS) participates in NADP(+) binding. Substrate-binding positions include 277-280 (NEIF) and Asn307. 307–309 (NYG) provides a ligand contact to NADP(+). Residue 446–448 (SLL) participates in FAD binding. Ser449 contributes to the substrate binding site.

It belongs to the lysine N(6)-hydroxylase/L-ornithine N(5)-oxygenase family. In terms of assembly, homotetramer. FAD is required as a cofactor.

The catalysed reaction is L-ornithine + NADPH + O2 = N(5)-hydroxy-L-ornithine + NADP(+) + H2O. It carries out the reaction L-ornithine + NADH + O2 = N(5)-hydroxy-L-ornithine + NAD(+) + H2O. The protein operates within siderophore biosynthesis. In terms of biological role, L-ornithine N(5)-monooxygenase; part of the gene cluster that mediates the biosynthesis of hydroxamate-containing siderophores that play a critical role in virulence via intracellular iron acquisition during macrophage infection. SID1 catalyzes the conversion of L-ornithine to N(5)-hydroxyornithine, the first step in the biosynthesis of all hydroxamate-containing siderophores. In Ajellomyces capsulatus (Darling's disease fungus), this protein is L-ornithine N(5)-monooxygenase.